The sequence spans 413 residues: 2,3-bisphosphoglycerate-independent phosphoglycerate mutase (413 aa).

The protein belongs to the BPG-independent phosphoglycerate mutase family. A-PGAM subfamily.

The catalysed reaction is (2R)-2-phosphoglycerate = (2R)-3-phosphoglycerate. It participates in carbohydrate degradation; glycolysis; pyruvate from D-glyceraldehyde 3-phosphate: step 3/5. Its function is as follows. Catalyzes the interconversion of 2-phosphoglycerate and 3-phosphoglycerate. This Metallosphaera sedula (strain ATCC 51363 / DSM 5348 / JCM 9185 / NBRC 15509 / TH2) protein is 2,3-bisphosphoglycerate-independent phosphoglycerate mutase.